Here is a 360-residue protein sequence, read N- to C-terminus: MLKKLAVCLSIVLLLLGAASPISAHTVYPVNPNAQQTTKDIMNWLAHLPNRSENRVMSGAFGGYSDVTFSMTEENRLKNATGQSPAIYGCDYGRGWLETADITDTIDYCCNSSLISYWKSGGLPQVSLHLANPAFPSGNYKTAISNSQYKNILDPSTVEGKRLEALLSKIADGLTQLKNQGVTVLFRPLHEMNGEWFWWGLTGYNQKDNERISLYKELYKKIYRYMTETRGLDNLLWVYSPDANRDFKTDFYPGSSYVDITGLDAYFTDPYAISGYDEMLSLKKPFAFAETGPSGNIGSFDYAAFINAIRQKYPQTTYFLTWDEQLSPAANQGAQSLYQNSWTLNKGEIWNGGSLTPIAE.

The N-terminal stretch at 1–24 (MLKKLAVCLSIVLLLLGAASPISA) is a signal peptide. In terms of domain architecture, GH26 spans 36-347 (QTTKDIMNWL…YQNSWTLNKG (312 aa)). Substrate is bound at residue H129. E191 serves as the catalytic Proton donor. The substrate site is built by W196 and Y266. Residue E290 is the Nucleophile of the active site.

Belongs to the glycosyl hydrolase 26 family. As to quaternary structure, homodimer.

The protein resides in the secreted. The catalysed reaction is Random hydrolysis of (1-&gt;4)-beta-D-mannosidic linkages in mannans, galactomannans and glucomannans.. In terms of biological role, involved in the degradation of glucomannan. Catalyzes the endo hydrolysis of beta-1,4-linked mannan, galactomannan and glucomannan. This is Mannan endo-1,4-beta-mannosidase from Bacillus subtilis.